We begin with the raw amino-acid sequence, 472 residues long: UDP-N-acetylmuramate--L-alanine ligase (472 aa).

ATP is bound at residue 122–128 (GTHGKTT).

It belongs to the MurCDEF family.

The protein localises to the cytoplasm. It catalyses the reaction UDP-N-acetyl-alpha-D-muramate + L-alanine + ATP = UDP-N-acetyl-alpha-D-muramoyl-L-alanine + ADP + phosphate + H(+). Its pathway is cell wall biogenesis; peptidoglycan biosynthesis. Cell wall formation. The polypeptide is UDP-N-acetylmuramate--L-alanine ligase (Thermobifida fusca (strain YX)).